The chain runs to 733 residues: Hypermethylated in cancer 1 protein (733 aa).

One can recognise a BTB domain in the interval 47–110; it reads CDVIIVVQNA…IYTGRLTDSV (64 aa). Positions 154 to 315 are mediates HDAC-dependent transcriptional repression; the sequence is KYCHLRGGGS…PFRGSGGSPG (162 aa). An Omega-N-methylarginine modification is found at Arg-159. The disordered stretch occupies residues 189-209; that stretch reads YSSPAGPPPPPAAEPPSGPDA. The segment covering 193 to 206 has biased composition (pro residues); that stretch reads AGPPPPPAAEPPSG. Ser-237 carries the post-translational modification Phosphoserine. The tract at residues 241–247 is interaction with CTBP1; it reads GLDLSKK. The segment at 241 to 421 is disordered; the sequence is GLDLSKKSPP…PGGHLEGYPC (181 aa). Ser-248 bears the Phosphoserine mark. Lys-333 bears the N6-acetyllysine; alternate mark. Lys-333 is covalently cross-linked (Glycyl lysine isopeptide (Lys-Gly) (interchain with G-Cter in SUMO); alternate). The span at 344–361 shows a compositional bias: basic and acidic residues; that stretch reads ELVRDRGSPGERLEERGG. Ser-366 is subject to Phosphoserine. The span at 368-380 shows a compositional bias: pro residues; the sequence is GGPPLGLVPPPRY. C2H2-type zinc fingers lie at residues 437–464, 507–534, 535–562, 563–590, and 591–618; these read YVCI…EEEE, YRCA…LTRP, YPCT…GLKP, FACD…GEKP, and YECQ…VGGA. Residue Ser-704 is modified to Phosphoserine.

The protein belongs to the krueppel C2H2-type zinc-finger protein family. Hic subfamily. As to quaternary structure, self-associates. Interacts with HIC2. Interacts with CTBP1 and CTBP2. Interacts with TCF7L2 and ARID1A. Interacts with MTA1 and MBD3; indicative for an association with the NuRD complex. Interacts with SIRT1. Acetylated on several residues, including Lys-333. Lys-333 is deacetylated by SIRT1. In terms of processing, sumoylated on Lys-333 by a PIAS family member, which enhances interaction with MTA1, positively regulates transcriptional repression activity and is enhanced by HDAC4. Ubiquitously expressed with highest levels in heart and lung.

It localises to the nucleus. Transcriptional repressor. Recognizes and binds to the consensus sequence '5-[CG]NG[CG]GGGCA[CA]CC-3'. May act as a tumor suppressor. Involved in development of head, face, limbs and ventral body wall. Involved in down-regulation of SIRT1 and thereby is involved in regulation of p53/TP53-dependent apoptotic DNA-damage responses. The specific target gene promoter association seems to be depend on corepressors, such as CTBP1 or CTBP2 and MTA1. In cooperation with MTA1 (indicative for an association with the NuRD complex) represses transcription from CCND1/cyclin-D1 and CDKN1C/p57Kip2 specifically in quiescent cells. Involved in regulation of the Wnt signaling pathway probably by association with TCF7L2 and preventing TCF7L2 and CTNNB1 association with promoters of TCF-responsive genes. Seems to repress transcription from E2F1 and ATOH1 which involves ARID1A, indicative for the participation of a distinct SWI/SNF-type chromatin-remodeling complex. Probably represses transcription from ACKR3, FGFBP1 and EFNA1. This is Hypermethylated in cancer 1 protein (Hic1) from Mus musculus (Mouse).